A 132-amino-acid chain; its full sequence is Glycine cleavage system H protein (132 aa).

The 83-residue stretch at 24 to 106 (IATIGLSAHA…YEEGWFIKVR (83 aa)) folds into the Lipoyl-binding domain. K65 is modified (N6-lipoyllysine).

Belongs to the GcvH family. As to quaternary structure, the glycine cleavage system is composed of four proteins: P, T, L and H. (R)-lipoate is required as a cofactor.

Its function is as follows. The glycine cleavage system catalyzes the degradation of glycine. The H protein shuttles the methylamine group of glycine from the P protein to the T protein. This chain is Glycine cleavage system H protein, found in Picosynechococcus sp. (strain ATCC 27264 / PCC 7002 / PR-6) (Agmenellum quadruplicatum).